Reading from the N-terminus, the 37-residue chain is Mu-agatoxin-Aa1b (37 aa).

Cystine bridges form between Cys-2-Cys-18, Cys-9-Cys-23, Cys-17-Cys-33, and Cys-25-Cys-31. Position 37 is a serine amide (Ser-37).

Belongs to the neurotoxin 07 (Beta/delta-agtx) family. 01 (aga-2) subfamily. In terms of tissue distribution, expressed by the venom gland.

The protein resides in the secreted. Insecticidal neurotoxin that induces an irreversible spastic paralysis when injected into insects. Modifies presynaptic voltage-gated sodium channels (Nav), causing them to open at the normal resting potential of the nerve. This leads to spontaneous release of neurotransmitter and repetitive action potentials in motor neurons. This chain is Mu-agatoxin-Aa1b, found in Agelenopsis aperta (North American funnel-web spider).